The primary structure comprises 226 residues: NADH-ubiquinone oxidoreductase chain 6 (226 aa).

5 helical membrane passes run 2 to 22, 28 to 48, 56 to 76, 90 to 110, and 169 to 189; these read STLG…FVIL, IYSI…LLTV, IYIL…VMMI, YNIY…ILIT, and IWFI…IYIT.

It belongs to the complex I subunit 6 family.

It is found in the mitochondrion membrane. The catalysed reaction is a ubiquinone + NADH + 5 H(+)(in) = a ubiquinol + NAD(+) + 4 H(+)(out). Its function is as follows. Core subunit of the mitochondrial membrane respiratory chain NADH dehydrogenase (Complex I) that is believed to belong to the minimal assembly required for catalysis. Complex I functions in the transfer of electrons from NADH to the respiratory chain. The immediate electron acceptor for the enzyme is believed to be ubiquinone. The protein is NADH-ubiquinone oxidoreductase chain 6 (nad6) of Dictyostelium citrinum (Slime mold).